Reading from the N-terminus, the 221-residue chain is Ependymin-2 (221 aa).

The N-terminal stretch at 1 to 21 (MQDFAFAALSIWLCLGATALA) is a signal peptide. N-linked (GlcNAc...) asparagine glycosylation is found at Asn-33, Asn-73, and Asn-97.

It belongs to the ependymin family. Binds calcium through the terminal sialic acids. As to expression, EPDs are synthesized in the meninx and secreted in the cerebrospinal fluid.

It localises to the secreted. Functionally, may play a role in neural plasticity. May be involved during axon regeneration. This is Ependymin-2 (epd2) from Oncorhynchus mykiss (Rainbow trout).